Here is a 712-residue protein sequence, read N- to C-terminus: MATPAAVNPPEMASDIPGSVALPVAPMAATGQVRMAGAMPARGGKRRSGMDFDDEDGEGPSKFSRENHSEIERRRRNKMTQYITELSDMVPTCSALARKPDKLTILRMAVSHMKSMRGTGNKSTDGAYKPSFLTEQELKHLILEAADGFLFVVAAETGRVIYVSDSVTPVLNQPQSEWFGSTLYEQVHPDDVEKLREQLCTSENSMTGRILDLKTGTVKKEGQQSSMRMCMGSRRSFICRMRCGNAPLDHLPLNRITTMRKRFRNGLGPVKEGEAQYAVVHCTGYIKAWPPAGMTIPEEDADVGQGSKYCLVAIGRLQVTSSPVCMDMSGMSVPTEFLSRHNSDGIITFVDPRCISVIGYQPQDLLGKDILEFCHPEDQSHLRESFQQVVKLKGQVLSVMYRFRTKNREWLLIRTSSFTFQNPYSDEIEYVICTNTNVKQLQQQQAELEVHQRDGLSSYDLSQVPVPNLPAGVHEAGKSVEKADAIFSQERDPRFAEMFAGISASEKKMMSSASASGSQQIYSQGSPFPAGHSGKAFSSSVVHVPGVNDIQSSSSTGQNISQISRQLNQGQVAWTGSRPPFPGQPSKTQSSAFGIGSSHPYPADPSSYSPLSSPAASSPSGNAYPSLANRTPGFAESGQSGGQFQGRPSEVWSQWQSQHHGQQSGEQHSHQQPGQTEVFQDMLPMPGDPTQGTGNYNIEDFADLGMFPPFSE.

The segment at 36–73 is disordered; that stretch reads AGAMPARGGKRRSGMDFDDEDGEGPSKFSRENHSEIER. Arginine 42 carries the post-translational modification Omega-N-methylarginine. Positions 63 to 73 are enriched in basic and acidic residues; that stretch reads FSRENHSEIER. Residues 63 to 116 form the bHLH domain; the sequence is FSRENHSEIERRRRNKMTQYITELSDMVPTCSALARKPDKLTILRMAVSHMKSM. 2 consecutive PAS domains span residues 134–209 and 323–393; these read TEQE…MTGR and PVCM…VKLK. The 44-residue stretch at 398–441 folds into the PAC domain; sequence SVMYRFRTKNREWLLIRTSSFTFQNPYSDEIEYVICTNTNVKQL. The interval 573 to 712 is disordered; that stretch reads AWTGSRPPFP…DLGMFPPFSE (140 aa). 2 stretches are compositionally biased toward low complexity: residues 597-626 and 653-675; these read SSHP…AYPS and SQWQ…QPGQ.

In terms of assembly, efficient DNA binding requires dimerization with another bHLH protein. Heterodimer with NPAS4 or SIM1. Heterodimer with the aryl hydrocarbon receptor (AHR) or the SIM1 protein. Interacts with TACC3. Restricted to adult brain and kidney.

The protein resides in the nucleus. In terms of biological role, transcription factor that plays a role in the development of the hypothalamo-pituitary axis, postnatal brain growth, and visual and renal function. Specifically recognizes the xenobiotic response element (XRE). The chain is Aryl hydrocarbon receptor nuclear translocator 2 (Arnt2) from Mus musculus (Mouse).